A 286-amino-acid chain; its full sequence is UPF0725 protein At2g20620 (286 aa).

The interval 1-49 is disordered; sequence MVLETPVCSPIDKESSSDDVQLNKPPKKKRKLDVVYPPRDNTSSSSDVK.

Belongs to the UPF0725 (EMB2204) family.

The protein is UPF0725 protein At2g20620 of Arabidopsis thaliana (Mouse-ear cress).